Reading from the N-terminus, the 125-residue chain is Phosphoribosyl-AMP cyclohydrolase (125 aa).

D74 contacts Mg(2+). Residue C75 coordinates Zn(2+). Residues D76 and D78 each coordinate Mg(2+). Zn(2+)-binding residues include C92 and C99.

It belongs to the PRA-CH family. In terms of assembly, homodimer. It depends on Mg(2+) as a cofactor. Requires Zn(2+) as cofactor.

The protein localises to the cytoplasm. The catalysed reaction is 1-(5-phospho-beta-D-ribosyl)-5'-AMP + H2O = 1-(5-phospho-beta-D-ribosyl)-5-[(5-phospho-beta-D-ribosylamino)methylideneamino]imidazole-4-carboxamide. It functions in the pathway amino-acid biosynthesis; L-histidine biosynthesis; L-histidine from 5-phospho-alpha-D-ribose 1-diphosphate: step 3/9. In terms of biological role, catalyzes the hydrolysis of the adenine ring of phosphoribosyl-AMP. This is Phosphoribosyl-AMP cyclohydrolase from Desulforapulum autotrophicum (strain ATCC 43914 / DSM 3382 / VKM B-1955 / HRM2) (Desulfobacterium autotrophicum).